The chain runs to 333 residues: Squamosa promoter-binding-like protein 8 (333 aa).

A disordered region spans residues 1-28; it reads MLDYEWDNPSSIVLSGDERNPDSDPTRS. A compositionally biased stretch (basic and acidic residues) spans 16 to 25; sequence GDERNPDSDP. Positions 179-269 are sufficient and necessary for DNA binding; sequence MANSLSTPRC…RKCHQSASAT (91 aa). Residues 185–262 form an SBP-type zinc finger; it reads TPRCQAEGCN…ADHNRRRRKC (78 aa). Zn(2+)-binding residues include C188, C193, C210, H213, C229, C232, H236, and C248. A Bipartite nuclear localization signal motif is present at residues 245–261; the sequence is KRSCRKRLADHNRRRRK. Disordered regions lie at residues 254 to 303 and 314 to 333; these read DHNR…TISL and TASS…FSSG. Residues 264–284 are compositionally biased toward polar residues; sequence QSASATQDTGTGKTTPKSPND. The span at 289–299 shows a compositional bias: low complexity; that stretch reads ASSSPSSNAPP.

It depends on Zn(2+) as a cofactor. In terms of tissue distribution, expressed in shoot apical region and early floral tissues. Transcripts levels increase in developing pollen sacs, and decrease in later stage of anther development. Strongly expressed in the placental region of the carpels.

It localises to the nucleus. Its subcellular location is the cytoplasm. In terms of biological role, trans-acting factor that binds specifically to the consensus nucleotide sequence 5'-TNCGTACAA-3'. Binds specifically to the 5'-GTAC-3' core sequence. Involved in development and floral organogenesis. Required for ovule differentiation, pollen production, filament elongation, seed formation and siliques elongation. Also seems to play a role in the formation of trichomes on sepals. May positively modulate gibberellin (GA) signaling in flower. The polypeptide is Squamosa promoter-binding-like protein 8 (SPL8) (Arabidopsis thaliana (Mouse-ear cress)).